Consider the following 948-residue polypeptide: RNA polymerase-associated protein RapA (948 aa).

Positions 164-332 (EVADRSAPRV…FARLRLLDPN (169 aa)) constitute a Helicase ATP-binding domain. 177-184 (DEVGLGKT) contributes to the ATP binding site. Positions 278 to 281 (DEAH) match the DEAH box motif. Residues 473-627 (RVDWLIDTLK…TCPTGNALQH (155 aa)) form the Helicase C-terminal domain.

This sequence belongs to the SNF2/RAD54 helicase family. RapA subfamily. In terms of assembly, interacts with the RNAP. Has a higher affinity for the core RNAP than for the holoenzyme. Its ATPase activity is stimulated by binding to RNAP.

Transcription regulator that activates transcription by stimulating RNA polymerase (RNAP) recycling in case of stress conditions such as supercoiled DNA or high salt concentrations. Probably acts by releasing the RNAP, when it is trapped or immobilized on tightly supercoiled DNA. Does not activate transcription on linear DNA. Probably not involved in DNA repair. The protein is RNA polymerase-associated protein RapA of Pseudomonas putida (strain GB-1).